The chain runs to 581 residues: mRNA-decapping enzyme 1B (581 aa).

Position 145 is a phosphoserine (S145). 2 disordered regions span residues 181-222 (QISS…PEPQ) and 236-258 (APCQEATGPPQTLPLQQQQPEKF). The segment covering 204-219 (GSRQQRGPRPGQTSDP) has biased composition (polar residues). Positions 244 to 255 (PPQTLPLQQQQP) are enriched in low complexity. Phosphoserine is present on residues S269 and S326. The interval 349–411 (AENRCEPGAP…HQPVTGPGEV (63 aa)) is disordered. Over residues 355 to 367 (PGAPAPASSATTP) the composition is skewed to low complexity. T366 carries the phosphothreonine modification. A compositionally biased stretch (polar residues) spans 368–381 (VSLAQPTRLSSALP). A compositionally biased stretch (pro residues) spans 382 to 401 (PQTPGPRALPRPAPPGPGPG). At S412 the chain carries Phosphoserine. Residues 427 to 468 (QQLPAPGRPALAAKFPTATLSTRARNPLEPWRDPPPSTEQPA) are disordered. At S475 the chain carries Phosphoserine. The interval 498–522 (SWAPPQERSRAPLPPGNQDPAATPT) is disordered.

This sequence belongs to the DCP1 family. In terms of assembly, interacts with DCP1A.

It localises to the cytoplasm. Its subcellular location is the nucleus. It catalyses the reaction a 5'-end (N(7)-methyl 5'-triphosphoguanosine)-ribonucleoside in mRNA + H2O = N(7)-methyl-GDP + a 5'-end phospho-ribonucleoside in mRNA + 2 H(+). In terms of biological role, may play a role in the degradation of mRNAs, both in normal mRNA turnover and in nonsense-mediated mRNA decay. May remove the 7-methyl guanine cap structure from mRNA molecules, yielding a 5'-phosphorylated mRNA fragment and 7m-GDP. The sequence is that of mRNA-decapping enzyme 1B (DCP1B) from Bos taurus (Bovine).